A 630-amino-acid polypeptide reads, in one-letter code: tRNA uridine 5-carboxymethylaminomethyl modification enzyme MnmG (630 aa).

Residue 13-18 (GGGHAG) participates in FAD binding. 273–287 (GPRYCPSIEDKVMRF) contacts NAD(+).

This sequence belongs to the MnmG family. In terms of assembly, homodimer. Heterotetramer of two MnmE and two MnmG subunits. FAD is required as a cofactor.

The protein localises to the cytoplasm. Functionally, NAD-binding protein involved in the addition of a carboxymethylaminomethyl (cmnm) group at the wobble position (U34) of certain tRNAs, forming tRNA-cmnm(5)s(2)U34. This Actinobacillus pleuropneumoniae serotype 5b (strain L20) protein is tRNA uridine 5-carboxymethylaminomethyl modification enzyme MnmG.